The chain runs to 461 residues: Serine/threonine-protein kinase VHS1 (461 aa).

One can recognise a Protein kinase domain in the interval 12 to 337 (YLITSQIGEG…KEVSSITSFT (326 aa)). ATP contacts are provided by residues 18–26 (IGEGAYGLV) and lysine 41. Aspartate 185 serves as the catalytic Proton acceptor. Residues 384-433 (LSYTSSSEEEDGIKEGIDDDNGSRSGSFGTLDTDTGLHSSFTSTSCESDN) form a disordered region. The segment covering 390–403 (SEEEDGIKEGIDDD) has biased composition (acidic residues). Residues 406 to 433 (SRSGSFGTLDTDTGLHSSFTSTSCESDN) show a composition bias toward polar residues.

It belongs to the protein kinase superfamily. Ser/Thr protein kinase family.

It is found in the cytoplasm. The enzyme catalyses L-seryl-[protein] + ATP = O-phospho-L-seryl-[protein] + ADP + H(+). It carries out the reaction L-threonyl-[protein] + ATP = O-phospho-L-threonyl-[protein] + ADP + H(+). Its function is as follows. Probable serine/threonine protein kinase involved in the G1-S transition. The sequence is that of Serine/threonine-protein kinase VHS1 (VHS1) from Saccharomyces cerevisiae (strain ATCC 204508 / S288c) (Baker's yeast).